Consider the following 340-residue polypeptide: Ribonucleoside-diphosphate reductase small subunit (340 aa).

The chain crosses the membrane as a helical span at residues 180-200 (FILMILIEGIFFAASFAAIAY).

It belongs to the ribonucleoside diphosphate reductase small chain family. As to quaternary structure, heterotetramer composed of a homodimer of the large subunit (R1) and a homodimer of the small subunit (R2). Larger multisubunit protein complex are also active, composed of (R1)n(R2)n. It depends on Fe cation as a cofactor.

It localises to the host membrane. It carries out the reaction a 2'-deoxyribonucleoside 5'-diphosphate + [thioredoxin]-disulfide + H2O = a ribonucleoside 5'-diphosphate + [thioredoxin]-dithiol. In terms of biological role, ribonucleoside-diphosphate reductase holoenzyme provides the precursors necessary for viral DNA synthesis. Allows virus growth in non-dividing cells, as well as reactivation from latency in infected hosts. Catalyzes the biosynthesis of deoxyribonucleotides from the corresponding ribonucleotides. The protein is Ribonucleoside-diphosphate reductase small subunit of Human herpesvirus 1 (strain 17) (HHV-1).